The following is a 292-amino-acid chain: Hydroxysqualene synthase (292 aa).

The protein belongs to the phytoene/squalene synthase family. HpnC subfamily.

The enzyme catalyses presqualene diphosphate + H2O = hydroxysqualene + diphosphate. It functions in the pathway secondary metabolite biosynthesis; hopanoid biosynthesis. Functionally, involved in the biosynthesis of the hopanoid precursor squalene (SQ) from farnesyl diphosphate (FPP). Catalyzes the second step, the conversion of presqualene diphosphate (PSPP) to hydroxysqualene (HSQ). This Sinorhizobium fredii (strain NBRC 101917 / NGR234) protein is Hydroxysqualene synthase.